The following is a 191-amino-acid chain: Calcium and integrin-binding protein 1 (191 aa).

The N-myristoyl glycine moiety is linked to residue glycine 2. 2 consecutive EF-hand domains span residues 103–138 and 148–183; these read TPDI…LTGE and EMKQ…SPDF. The Ca(2+) site is built by aspartate 116, aspartate 118, aspartate 120, threonine 122, aspartate 127, aspartate 161, aspartate 163, aspartate 165, threonine 167, and glutamate 172.

In terms of assembly, monomer. Interacts with the heterodimeric integrin alpha-IIb/beta3 (ITGA2B-ITGB3). Interacts with ITGA2B (via cytoplasmic domain); the interaction is direct and calcium-dependent. Interacts with the protein kinases PLK2/SNK and PRKDC (via the region immediately upstream of the kinase domain). Interacts with PLK3; the interaction inhibits PLK3 kinase activity. Interacts with PSEN2. Interacts (via C-terminus) with F8. Interacts with NBR1 (via C-terminus). Interacts with FEZ1 (via C-terminus). Interacts with UBR5 (via C-terminus); the interaction is sensitive to DNA damage, and may target CIB1 for ubiquitin-mediated degradation. Interacts with IFI6; the interaction is direct. Interacts with BCL2. Interacts with ITPR3; the interaction occurs in a calcium dependent manner. Interacts with PTK2/FAK1. Interacts with MAP3K5; the interaction inhibits MAP3K5 activation by phosphorylation, and its subsequent interaction with TRAF2. Interacts (via C-terminal region) with STMN2 (via the N-terminal region); the interaction is direct, occurs in a calcium-dependent manner and attenuates the STMN2-induced neurite outgrowth inhibition. Interacts with SPHK1, the interaction occurs in a calcium-dependent manner. Interacts with ITGA2B (via C-terminal cytoplasmic tail); the interaction occurs upon platelet aggregation and is stabilized/increased in a calcium and magnesium-dependent manner. Interacts with PAK1 (via N-terminal region); the interaction is direct and occurs in a calcium-dependent manner. Interacts with RAC3 (via C-terminal region); the interaction induces their association with the cytoskeleton upon alpha-IIb/beta3 integrin-mediated adhesion. Interacts with ITGA5 and ITGAV. Interacts with MYO1C. Interacts with ITGA2B (via C-terminal cytoplasmic tail region). Interacts (via C-terminal region) with PPP3R1; the interaction increases upon cardiomyocytes hypertrophy. Interacts with CACNA1C; the interaction increases upon cardiomyocytes hypertrophy. Interacts with TAS1R2 (via C-terminus); this interaction is independent of the myristoylation state of CIB1. Interacts and forms a complex with TMC6 and TMC8; the interaction stabilizes each component of the complex.

The protein resides in the membrane. It is found in the cell membrane. Its subcellular location is the sarcolemma. The protein localises to the apical cell membrane. It localises to the cell projection. The protein resides in the ruffle membrane. It is found in the filopodium tip. Its subcellular location is the growth cone. The protein localises to the lamellipodium. It localises to the cytoplasm. The protein resides in the cytoskeleton. It is found in the microtubule organizing center. Its subcellular location is the centrosome. The protein localises to the perinuclear region. It localises to the nucleus. The protein resides in the neuron projection. It is found in the perikaryon. Its function is as follows. Calcium-binding protein that plays a role in the regulation of numerous cellular processes, such as cell differentiation, cell division, cell proliferation, cell migration, thrombosis, angiogenesis, cardiac hypertrophy and apoptosis. Involved in bone marrow megakaryocyte differentiation by negatively regulating thrombopoietin-mediated signaling pathway. Participates in the endomitotic cell cycle of megakaryocyte, a form of mitosis in which both karyokinesis and cytokinesis are interrupted. Plays a role in integrin signaling by negatively regulating alpha-IIb/beta3 activation in thrombin-stimulated megakaryocytes preventing platelet aggregation. Up-regulates PTK2/FAK1 activity, and is also needed for the recruitment of PTK2/FAK1 to focal adhesions; it thus appears to play an important role in focal adhesion formation. Positively regulates cell migration on fibronectin in a CDC42-dependent manner, the effect being negatively regulated by PAK1. Functions as a negative regulator of stress activated MAP kinase (MAPK) signaling pathways. Down-regulates inositol 1,4,5-trisphosphate receptor-dependent calcium signaling. Involved in sphingosine kinase SPHK1 translocation to the plasma membrane in a N-myristoylation-dependent manner preventing TNF-alpha-induced apoptosis. Regulates serine/threonine-protein kinase PLK3 activity for proper completion of cell division progression. Plays a role in microtubule (MT) dynamics during neuronal development; disrupts the MT depolymerization activity of STMN2 attenuating NGF-induced neurite outgrowth and the MT reorganization at the edge of lamellipodia. Promotes cardiomyocyte hypertrophy via activation of the calcineurin/NFAT signaling pathway. Stimulates calcineurin PPP3R1 activity by mediating its anchoring to the sarcolemma. In ischemia-induced (pathological or adaptive) angiogenesis, stimulates endothelial cell proliferation, migration and microvessel formation by activating the PAK1 and ERK1/ERK2 signaling pathway. Also promotes cancer cell survival and proliferation. May regulate cell cycle and differentiation of spermatogenic germ cells, and/or differentiation of supporting Sertoli cells. Forms a complex with TMC6/EVER1 and TMC8/EVER2 in lymphocytes and keratynocytes where CIB1 stabilizes TMC6 and TMC8 levels and reciprocally. The sequence is that of Calcium and integrin-binding protein 1 (CIB1) from Bos taurus (Bovine).